Reading from the N-terminus, the 920-residue chain is Ubiquitin ligase-binding protein BUL2 (920 aa).

Polar residues predominate over residues 1–10 (MTFTFSTSSR). A disordered region spans residues 1–89 (MTFTFSTSSR…EENSLEMDCT (89 aa)). At Thr22 the chain carries Phosphothreonine. Positions 35–57 (QQLSSNSTDNSLHPNSGQTPRAS) are enriched in polar residues. Basic and acidic residues predominate over residues 73-82 (DRLRQEREEN). Positions 129–133 (FPPSY) match the PY-motif motif. The residue at position 557 (Ser557) is a Phosphoserine.

It belongs to the BUL1 family. In terms of assembly, component of the RSP5-BUL1/2 ubiquitin ligase complex composed of at least RSP5 and BUL1 or BUL2.

Its subcellular location is the cytoplasm. The protein operates within protein modification; protein ubiquitination. Its function is as follows. Component of a RSP5 ubiquitin ligase complex which specifies polyubiquitination and intracellular trafficking of the general amino acid permease GAP1 as well as other permeases such as PMA1. The RSP5-BUL1/2 complex is also necessary for the heat-shock element (HSE)-mediated gene expression, nitrogen starvation GLN3-dependent transcription and pressure-induced differential regulation of the 2 tryptophan permeases TAT1 and TAT2. The chain is Ubiquitin ligase-binding protein BUL2 (BUL2) from Saccharomyces cerevisiae (strain ATCC 204508 / S288c) (Baker's yeast).